We begin with the raw amino-acid sequence, 330 residues long: MQTLAQTLSVQAVNASLTQLLLTLADTSKAISGAVRHGALAGVLGATEQENIQGETQKKLDVITNDMLKDALKADGNVRGLASEEEDYVVEVNAKGEYLVCFDPLDGSSNIDINSLVGTIFSVLPAPAGELNEQSFLQAGRKQVAAGYVLYGPSTMMALTTGQGTQFYTLAPDSQEFLLTDDSVQITPDTAEFAINMSNQRFWEAPMQTYIADLLLGEIGPREQSFNMRWIAAMVGDVHRVLCRGGIFSYPTDNKNPAKPFKLRLMYEANPMALLVEQAGGKASTGYETILDIQPTEIHQRVAVILGSANEVDTCLSYHGIDYSEEPSID.

Residues Glu-84, Asp-103, Leu-105, and Asp-106 each coordinate Mg(2+). Substrate contacts are provided by residues 106–109 (DGSS), Asn-196, and Lys-262. Glu-268 is a Mg(2+) binding site.

The protein belongs to the FBPase class 1 family. Homotetramer. Mg(2+) is required as a cofactor.

The protein localises to the cytoplasm. It catalyses the reaction beta-D-fructose 1,6-bisphosphate + H2O = beta-D-fructose 6-phosphate + phosphate. It participates in carbohydrate biosynthesis; gluconeogenesis. This is Fructose-1,6-bisphosphatase class 1 from Shewanella frigidimarina (strain NCIMB 400).